We begin with the raw amino-acid sequence, 103 residues long: SOSS complex subunit C (103 aa).

It belongs to the SOSS-C family. Belongs to the multiprotein complex Integrator. Component of the SOSS complex, composed of SOSS-B (SOSS-B1/NABP2 or SOSS-B2/NABP1), SOSS-A/INTS3 and SOSS-C/INIP.

It localises to the nucleus. Component of the SOSS complex, a multiprotein complex that functions downstream of the MRN complex to promote DNA repair and G2/M checkpoint. The SOSS complex associates with single-stranded DNA at DNA lesions and influences diverse endpoints in the cellular DNA damage response including cell-cycle checkpoint activation, recombinational repair and maintenance of genomic stability. Required for efficient homologous recombination-dependent repair of double-strand breaks (DSBs). The chain is SOSS complex subunit C (INIP) from Gallus gallus (Chicken).